The sequence spans 393 residues: Lipid-A-disaccharide synthase (393 aa).

Belongs to the LpxB family.

It carries out the reaction a lipid X + a UDP-2-N,3-O-bis[(3R)-3-hydroxyacyl]-alpha-D-glucosamine = a lipid A disaccharide + UDP + H(+). The protein operates within bacterial outer membrane biogenesis; LPS lipid A biosynthesis. Its function is as follows. Condensation of UDP-2,3-diacylglucosamine and 2,3-diacylglucosamine-1-phosphate to form lipid A disaccharide, a precursor of lipid A, a phosphorylated glycolipid that anchors the lipopolysaccharide to the outer membrane of the cell. This is Lipid-A-disaccharide synthase from Colwellia psychrerythraea (strain 34H / ATCC BAA-681) (Vibrio psychroerythus).